A 440-amino-acid polypeptide reads, in one-letter code: MPKYYIITYGCQMNKSDSEKVAGILENLGYTPSEKMEEADIILLNTCSVRERAEEKVFGKLGELRKLKKRNQNLLIGIFGCMAQRMKEELIEKFPHVDFVLGSYKFTELPKILESLDGKKKVVLAEDIPSPQDVDFRVIKRENKFQAWIPIIYGCNNFCTYCIVPYLRGREKSRDPEEIIREVEYLASQGVVEVTLLGQNVDSYGKDLGNVDLADLLVEIHRIPRIKRIRFLTSHPRDVSDKLIRVVATHPKVCPHWHLPLQAGSDRILRRMGRGYTYSEYKALIEKIRAEIPKASFSTDIIVGFPGEEEEDFLATRRALEEIKFDTVNLAIYSKRPGTPAANYEDLIPYETKKRWFDELENLQRKIIYEKNLSRVGKEEIVLAEEVNPKNPRELSGRTENYRLVFFEAEKELIGKFLLVKITEARLWSLKGEVIREVDL.

Positions 2 to 118 (PKYYIITYGC…LPKILESLDG (117 aa)) constitute an MTTase N-terminal domain. 6 residues coordinate [4Fe-4S] cluster: Cys11, Cys47, Cys81, Cys155, Cys159, and Cys162. Positions 141-370 (RENKFQAWIP…ENLQRKIIYE (230 aa)) constitute a Radical SAM core domain. The 64-residue stretch at 373–436 (LSRVGKEEIV…LWSLKGEVIR (64 aa)) folds into the TRAM domain.

This sequence belongs to the methylthiotransferase family. MiaB subfamily. As to quaternary structure, monomer. [4Fe-4S] cluster serves as cofactor.

It is found in the cytoplasm. The catalysed reaction is N(6)-dimethylallyladenosine(37) in tRNA + (sulfur carrier)-SH + AH2 + 2 S-adenosyl-L-methionine = 2-methylsulfanyl-N(6)-dimethylallyladenosine(37) in tRNA + (sulfur carrier)-H + 5'-deoxyadenosine + L-methionine + A + S-adenosyl-L-homocysteine + 2 H(+). Functionally, catalyzes the methylthiolation of N6-(dimethylallyl)adenosine (i(6)A), leading to the formation of 2-methylthio-N6-(dimethylallyl)adenosine (ms(2)i(6)A) at position 37 in tRNAs that read codons beginning with uridine. The chain is tRNA-2-methylthio-N(6)-dimethylallyladenosine synthase from Dictyoglomus thermophilum (strain ATCC 35947 / DSM 3960 / H-6-12).